A 207-amino-acid chain; its full sequence is Outer-membrane lipoprotein LolB (207 aa).

The N-terminal stretch at 1 to 23 is a signal peptide; that stretch reads MINLRRFTKFTLAGLTALSLLGG. A lipid anchor (N-palmitoyl cysteine) is attached at Cys24. A lipid anchor (S-diacylglycerol cysteine) is attached at Cys24.

This sequence belongs to the LolB family. In terms of assembly, monomer.

The protein resides in the cell outer membrane. Plays a critical role in the incorporation of lipoproteins in the outer membrane after they are released by the LolA protein. The polypeptide is Outer-membrane lipoprotein LolB (Shewanella amazonensis (strain ATCC BAA-1098 / SB2B)).